Here is a 411-residue protein sequence, read N- to C-terminus: Lissencephaly-1 homolog (411 aa).

Residues Q9 to T41 enclose the LisH domain. Residues T56–A83 are a coiled coil. WD repeat units lie at residues G106–K147, G148–K187, G191–T230, G233–E272, D275–T334, G337–T376, and A379–R411.

The protein belongs to the WD repeat LIS1/nudF family.

It is found in the cytoplasm. The protein resides in the cytoskeleton. The protein localises to the microtubule organizing center. Its subcellular location is the centrosome. Positively regulates the activity of the minus-end directed microtubule motor protein dynein. May enhance dynein-mediated microtubule sliding by targeting dynein to the microtubule plus end. Required for several dynein- and microtubule-dependent processes. In Drosophila grimshawi (Hawaiian fruit fly), this protein is Lissencephaly-1 homolog.